We begin with the raw amino-acid sequence, 729 residues long: Pentatricopeptide repeat-containing protein At4g04370 (729 aa).

17 PPR repeats span residues 10–44, 45–79, 80–110, 111–145, 178–208, 209–243, 244–278, 279–309, 310–344, 345–379, 380–414, 415–445, 447–481, 482–512, 513–547, 548–583, and 584–618; these read STKY…KLLP, DTFT…GFSS, DFYI…MRER, DVVH…GIKP, DIAV…MEQR, DMVS…GLRP, DQQT…GFDV, DMHL…IPNK, DVVC…GSDL, SSEA…GYTL, DTPA…DLVS, WNAI…TVQQ, DSFT…FIRP, CSLV…ISWK, DVVS…GMEP, NHVI…GVEP, and NHEH…PSID. Residues 619–694 form a type E motif region; it reads VLGIILDACR…LPGWSKIEMN (76 aa). The interval 695–723 is type E(+) motif; it reads GKTTTFFMNHTSHSDDTVSLLKLLSREMM.

The protein belongs to the PPR family. PCMP-E subfamily.

This Arabidopsis thaliana (Mouse-ear cress) protein is Pentatricopeptide repeat-containing protein At4g04370 (PCMP-E99).